The primary structure comprises 255 residues: Acetyl-coenzyme A carboxylase carboxyl transferase subunit alpha (255 aa).

The CoA carboxyltransferase C-terminal domain occupies 1-235 (MNIAKIVREA…KKELQTELAR (235 aa)).

It belongs to the AccA family. Acetyl-CoA carboxylase is a heterohexamer composed of biotin carboxyl carrier protein (AccB), biotin carboxylase (AccC) and two subunits each of ACCase subunit alpha (AccA) and ACCase subunit beta (AccD).

It is found in the cytoplasm. It carries out the reaction N(6)-carboxybiotinyl-L-lysyl-[protein] + acetyl-CoA = N(6)-biotinyl-L-lysyl-[protein] + malonyl-CoA. It functions in the pathway lipid metabolism; malonyl-CoA biosynthesis; malonyl-CoA from acetyl-CoA: step 1/1. In terms of biological role, component of the acetyl coenzyme A carboxylase (ACC) complex. First, biotin carboxylase catalyzes the carboxylation of biotin on its carrier protein (BCCP) and then the CO(2) group is transferred by the carboxyltransferase to acetyl-CoA to form malonyl-CoA. The chain is Acetyl-coenzyme A carboxylase carboxyl transferase subunit alpha from Streptococcus pneumoniae serotype 19F (strain G54).